The chain runs to 545 residues: Cryptochrome-1 (545 aa).

A Photolyase/cryptochrome alpha/beta domain is found at 3–138; the sequence is VNNILWFRHG…KCVEKVSHTL (136 aa). FAD contacts are provided by residues R236, S264, S266, Q307, H374, 406-408, C412, and N415; that span reads DAD.

It belongs to the DNA photolyase class-1 family. Interacts with tim and per; promoted by light conditions. FAD serves as cofactor.

The protein resides in the cytoplasm. It is found in the perinuclear region. It localises to the nucleus. In terms of biological role, blue light-dependent regulator that is the input of the circadian feedback loop. Has no photolyase activity for cyclobutane pyrimidine dimers or 6-4 photoproducts. Regulation of expression by light suggests a role in photoreception for locomotor activity rhythms. Functions, together with per, as a transcriptional repressor required for the oscillation of peripheral circadian clocks and for the correct specification of clock cells. Genes directly activated by the transcription factors Clock (Clk) and cycle (cyc) are repressed by cry. In Aedes aegypti (Yellowfever mosquito), this protein is Cryptochrome-1.